A 2281-amino-acid chain; its full sequence is Retinal-specific phospholipid-transporting ATPase ABCA4 (2281 aa).

Topologically, residues 1–24 are cytoplasmic; that stretch reads MGFARQIKLLLWKNWTLRKRQKIR. A helical transmembrane segment spans residues 25–45; it reads FVVELVWPLSLFLVLIWLRNV. Residues 46-646 are Extracellular-facing; sequence NPLYSKHECH…MPYPCFVDDS (601 aa). 2 disulfides stabilise this stretch: Cys54–Cys81 and Cys75–Cys324. Asn98 carries N-linked (GlcNAc...) asparagine glycosylation. 2 residues coordinate Mg(2+): Ser336 and Asn338. A disulfide bridge connects residues Cys370 and Cys519. Asn415 and Asn504 each carry an N-linked (Hex...) asparagine glycan. The an N-all-trans-retinylidenephosphatidylethanolamine site is built by Arg587 and Arg653. 3 cysteine pairs are disulfide-bonded: Cys641–Cys1488, Cys1442–Cys1453, and Cys1486–Cys1500. A helical membrane pass occupies residues 647-667; the sequence is FMIILNRCFPIFMVLAWIYSV. At 668 to 699 the chain is on the cytoplasmic side; that stretch reads SMTVKSIVLEKELRLKETLKNQGVSNRVIWCT. Residues 700 to 720 traverse the membrane as a helical segment; sequence WFLDSFSIMSMSICLLTIFIM. Residues 721–730 lie on the Extracellular side of the membrane; it reads HGRILHYSNP. A helical membrane pass occupies residues 731–751; it reads FILFLFLLAFSIATIMQCFLL. At 752–759 the chain is on the cytoplasmic side; that stretch reads STFFSRAS. Residues 760–780 form a helical membrane-spanning segment; sequence LAAACSGVIYFTLYLPHILCF. The Extracellular portion of the chain corresponds to 781–835; sequence AWQDRITADMKMAVSLLSPVAFGFGTEYLARFEEQGVGLQWSNIGNSPMEGDEFS. The chain crosses the membrane as a helical span at residues 836–856; the sequence is FLMSMKMMLLDAALYGLLAWY. Residues 857-1374 lie on the Cytoplasmic side of the membrane; the sequence is LDQVFPGDYG…IRSHKDFLAQ (518 aa). Phosphothreonine is present on Thr901. The ABC transporter 1 domain maps to 929–1160; sequence VCVKNLVKIF…FGTGFYLTLV (232 aa). Phe938, Gly966, and Lys969 together coordinate ATP. Position 970 (Thr970) interacts with Mg(2+). The ATP site is built by Thr971, Gln1010, Lys1054, Gly1064, Gly1065, and His1118. Ser1185 is modified (phosphoserine). The segment at 1295 to 1340 is disordered; the sequence is ENINLRHPCSGPSEKAGQTPQGSSSHPREPAAHPEGQPPPEREGHS. Residues 1310-1319 are compositionally biased toward polar residues; the sequence is AGQTPQGSSS. At Thr1313 the chain carries Phosphothreonine. Ser1317 and Ser1319 each carry phosphoserine. A helical transmembrane segment spans residues 1375-1395; sequence IVLPATFVFLALMLSLIIPPF. The Extracellular segment spans residues 1396–1679; it reads GEYPALTLHP…TVLTTSVDAV (284 aa). An N-linked (Hex...) asparagine glycan is attached at Asn1455. Residue Asn1527 is glycosylated (N-linked (Hex...) asparagine). An N-linked (GlcNAc...) asparagine glycan is attached at Asn1586. Asn1660 carries N-linked (Hex...) asparagine glycosylation. A helical membrane pass occupies residues 1680-1700; the sequence is VAICVIFAMSFVPASFVLYLI. Over 1701–1725 the chain is Cytoplasmic; that stretch reads QERVNKAKHLQFVSGVSPTTYWLTN. Residues 1726–1746 traverse the membrane as a helical segment; that stretch reads FLWDIMNYTVSAALVVGIFIG. Residues 1747–1757 are Extracellular-facing; the sequence is FQKKAYTSSEN. Residues 1758-1778 traverse the membrane as a helical segment; sequence LPALVALLMLYGWAVIPMMYP. The Cytoplasmic portion of the chain corresponds to 1779-1790; it reads ASFLFDIPSTAY. The chain crosses the membrane as a helical span at residues 1791 to 1811; the sequence is VALSCANLFIGINSSAITFVL. The Extracellular segment spans residues 1812–1829; that stretch reads ELFENNRTLLRINAMLRK. Asn1817 is a glycosylation site (N-linked (GlcNAc...) asparagine). Residues 1830–1850 traverse the membrane as a helical segment; it reads LLIIFPHFCLGRGLIDLALSQ. Residues 1851–1879 are Cytoplasmic-facing; that stretch reads AVTDVYARFGEEHSSNPFQWDLIGKNLAA. Residues 1880–1900 traverse the membrane as a helical segment; sequence MAVEGVVYFLLTLLIQYQFFF. Topologically, residues 1901-2281 are extracellular; sequence SRWTTEPAKE…VDKGNSAPQG (381 aa). Residue Asn1931 is glycosylated (N-linked (GlcNAc...) asparagine). Positions 1936-2168 constitute an ABC transporter 2 domain; it reads LRLNELTKVY…FGDGYIVTMK (233 aa). Residues Asn1972, Gly1973, Lys1976, Thr1977, and Thr1978 each contribute to the ATP site. Residue Thr1977 coordinates Mg(2+). 2 N-linked (GlcNAc...) asparagine glycosylation sites follow: Asn2004 and Asn2050. Gly2071 contacts ATP. The segment at 2242 to 2247 is essential for ATP binding and ATPase activity; it reads VFVNFA. Asn2251 carries an N-linked (GlcNAc...) asparagine glycan. A disordered region spans residues 2262 to 2281; sequence AAGASRQAKEVDKGNSAPQG.

N-glycosylated. In terms of processing, proteolytic cleavage by trypsin leads to a 120-kDa N-terminal fragment and a 115-kDa C-terminal fragment that are linked through disulfide bonds. Post-translationally, phosphorylation is independent of light exposure and modulates ATPase activity. Expressed in retina namely in the periphery and incisures of the rod outer segments (ROS).

The protein resides in the membrane. It localises to the cell projection. The protein localises to the cilium. Its subcellular location is the photoreceptor outer segment. It is found in the cytoplasmic vesicle. The protein resides in the endoplasmic reticulum. The catalysed reaction is ATP + H2O + phospholipidSide 1 = ADP + phosphate + phospholipidSide 2.. It carries out the reaction an N-all-trans-retinylidenephosphatidylethanolamine(out) + ATP + H2O = an N-all-trans-retinylidenephosphatidylethanolamine(in) + ADP + phosphate + H(+). It catalyses the reaction a 1,2-diacyl-sn-glycero-3-phosphoethanolamine(out) + ATP + H2O = a 1,2-diacyl-sn-glycero-3-phosphoethanolamine(in) + ADP + phosphate + H(+). The enzyme catalyses N-11-cis-retinylidenephosphatidylethanolamine(out) + ATP + H2O = N-11-cis-retinylidenephosphatidylethanolamine(in) + ADP + phosphate + H(+). The catalysed reaction is ATP + H2O = ADP + phosphate + H(+). With respect to regulation, all-trans-retinal transport activity is reduced by EDTA chelation of Mg2+. All-trans-retinal transport activity is inhibited by N-ethylmaleimide (NEM). Phosphatidylethanolamine transport is strongly inhibited by beryllium fluoride and NEM. Its function is as follows. Flippase that catalyzes in an ATP-dependent manner the transport of retinal-phosphatidylethanolamine conjugates like the 11-cis and all-trans isomers of N-retinylidene-phosphatidylethanolamine from the lumen to the cytoplasmic leaflet of photoreceptor outer segment disk membranes, where N-cis-retinylidene-phosphatidylethanolamine (N-cis-R-PE) is then isomerized to its all-trans isomer (N-trans-R-PE) and reduced by RDH8 to produce all-trans-retinol (all-trans-rol) and therefore prevents the accumulation of excess of 11-cis-retinal and its schiff-base conjugate and the formation of toxic bisretinoid. Displays both ATPase and GTPase activity that is strongly influenced by the lipid environment and the presence of retinoid compounds. Binds the unprotonated form of N-retinylidene-phosphatidylethanolamine with high affinity in the absence of ATP and ATP binding and hydrolysis induce a protein conformational change that causes the dissociation of N-retinylidene-phosphatidylethanolamine. The protein is Retinal-specific phospholipid-transporting ATPase ABCA4 of Bos taurus (Bovine).